A 67-amino-acid polypeptide reads, in one-letter code: uncharacterized protein (67 aa).

The chain crosses the membrane as a helical span at residues 19–39 (ISFIIFFFFYFFFFYFFYGFW).

It is found in the membrane. This is an uncharacterized protein from Dictyostelium discoideum (Social amoeba).